Here is a 179-residue protein sequence, read N- to C-terminus: Small ribosomal subunit protein uS7 (179 aa).

The protein belongs to the universal ribosomal protein uS7 family. Part of the 30S ribosomal subunit. Contacts proteins S9 and S11.

Its function is as follows. One of the primary rRNA binding proteins, it binds directly to 16S rRNA where it nucleates assembly of the head domain of the 30S subunit. Is located at the subunit interface close to the decoding center, probably blocks exit of the E-site tRNA. In Shigella flexneri serotype 5b (strain 8401), this protein is Small ribosomal subunit protein uS7.